A 332-amino-acid polypeptide reads, in one-letter code: Methylthioribose-1-phosphate isomerase (332 aa).

Residues 44 to 46 (RGA), arginine 87, and glutamine 192 contribute to the substrate site. Aspartate 233 acts as the Proton donor in catalysis. 243-244 (NK) lines the substrate pocket.

The protein belongs to the eIF-2B alpha/beta/delta subunits family. MtnA subfamily.

The catalysed reaction is 5-(methylsulfanyl)-alpha-D-ribose 1-phosphate = 5-(methylsulfanyl)-D-ribulose 1-phosphate. It functions in the pathway amino-acid biosynthesis; L-methionine biosynthesis via salvage pathway; L-methionine from S-methyl-5-thio-alpha-D-ribose 1-phosphate: step 1/6. Functionally, catalyzes the interconversion of methylthioribose-1-phosphate (MTR-1-P) into methylthioribulose-1-phosphate (MTRu-1-P). In Dehalococcoides mccartyi (strain CBDB1), this protein is Methylthioribose-1-phosphate isomerase.